We begin with the raw amino-acid sequence, 387 residues long: N-acetyldiaminopimelate deacetylase (387 aa).

Aspartate 75 is a catalytic residue. Glutamate 134 serves as the catalytic Proton acceptor.

This sequence belongs to the peptidase M20A family. N-acetyldiaminopimelate deacetylase subfamily.

The catalysed reaction is N-acetyl-(2S,6S)-2,6-diaminopimelate + H2O = (2S,6S)-2,6-diaminopimelate + acetate. Its pathway is amino-acid biosynthesis; L-lysine biosynthesis via DAP pathway; LL-2,6-diaminopimelate from (S)-tetrahydrodipicolinate (acetylase route): step 3/3. Catalyzes the conversion of N-acetyl-diaminopimelate to diaminopimelate and acetate. The chain is N-acetyldiaminopimelate deacetylase from Leuconostoc citreum (strain KM20).